The chain runs to 347 residues: uncharacterized protein (347 aa).

Zn(2+) is bound by residues Cys39, His65, Cys95, Cys98, Cys101, Cys109, and Glu152.

It belongs to the zinc-containing alcohol dehydrogenase family. It depends on Zn(2+) as a cofactor.

This is an uncharacterized protein from Escherichia coli (strain K12).